The chain runs to 101 residues: Small ribosomal subunit protein uS14 (101 aa).

This sequence belongs to the universal ribosomal protein uS14 family. As to quaternary structure, part of the 30S ribosomal subunit. Contacts proteins S3 and S10.

Binds 16S rRNA, required for the assembly of 30S particles and may also be responsible for determining the conformation of the 16S rRNA at the A site. This Paenarthrobacter aurescens (strain TC1) protein is Small ribosomal subunit protein uS14.